A 231-amino-acid polypeptide reads, in one-letter code: Large ribosomal subunit protein uL1 (231 aa).

Belongs to the universal ribosomal protein uL1 family. As to quaternary structure, part of the 50S ribosomal subunit.

Functionally, binds directly to 23S rRNA. The L1 stalk is quite mobile in the ribosome, and is involved in E site tRNA release. Its function is as follows. Protein L1 is also a translational repressor protein, it controls the translation of the L11 operon by binding to its mRNA. The sequence is that of Large ribosomal subunit protein uL1 from Mycoplasmopsis agalactiae (strain NCTC 10123 / CIP 59.7 / PG2) (Mycoplasma agalactiae).